We begin with the raw amino-acid sequence, 236 residues long: NEP1-interacting protein 1 (236 aa).

At 1–44 (MASSRFQSGFCPISSCPSLENFIERIKDACRFTLSAVLGTILSA) the chain is on the lumenal, thylakoid side. The helical transmembrane segment at 45 to 65 (VLTFFFALVGTLLGALTGALI) threads the bilayer. Residues 66–78 (GQETESGFIRGAA) lie on the Stromal side of the membrane. A helical membrane pass occupies residues 79–99 (VGAISGAVFSIEVFESSLVLW). The Lumenal, thylakoid segment spans residues 100–104 (KSNES). Residues 105–125 (RFGCLLYLIDVIVSLISGRLV) traverse the membrane as a helical segment. The Stromal portion of the chain corresponds to 126 to 236 (RERIGPAMLS…GSCPMCRRDL (111 aa)). Residues 191-233 (CSVCLQDFQLGETVRSLPHCHHMFHLPCIDNWLFRHGSCPMCR) form an RING-type; atypical zinc finger.

Belongs to the RING-type zinc finger family. NIP subfamily. In terms of assembly, interacts with RPOT2.

It is found in the plastid. Its subcellular location is the chloroplast thylakoid membrane. Functionally, intrinsic thylakoid membrane protein that fixes RPOT2 on the stromal side of the thylakoid membrane. This chain is NEP1-interacting protein 1 (NIP1), found in Arabidopsis thaliana (Mouse-ear cress).